The primary structure comprises 103 residues: Urease subunit gamma (103 aa).

This sequence belongs to the urease gamma subunit family. As to quaternary structure, heterotrimer of UreA (gamma), UreB (beta) and UreC (alpha) subunits. Three heterotrimers associate to form the active enzyme.

It is found in the cytoplasm. It carries out the reaction urea + 2 H2O + H(+) = hydrogencarbonate + 2 NH4(+). It functions in the pathway nitrogen metabolism; urea degradation; CO(2) and NH(3) from urea (urease route): step 1/1. The chain is Urease subunit gamma from Paracoccus denitrificans (strain Pd 1222).